Here is a 294-residue protein sequence, read N- to C-terminus: GTPase Era (294 aa).

Residues lysine 3–glutamate 170 form the Era-type G domain. Residues glycine 11–serine 18 are G1. Glycine 11 to serine 18 contacts GTP. Residues glutamine 37–asparagine 41 form a G2 region. Residues aspartate 58–glycine 61 are G3. Residues aspartate 58 to isoleucine 62 and asparagine 120 to aspartate 123 each bind GTP. The tract at residues asparagine 120–aspartate 123 is G4. Residues isoleucine 149 to alanine 151 are G5. The region spanning leucine 201–lysine 278 is the KH type-2 domain.

It belongs to the TRAFAC class TrmE-Era-EngA-EngB-Septin-like GTPase superfamily. Era GTPase family. In terms of assembly, monomer.

The protein resides in the cytoplasm. It is found in the cell membrane. Its function is as follows. An essential GTPase that binds both GDP and GTP, with rapid nucleotide exchange. Plays a role in 16S rRNA processing and 30S ribosomal subunit biogenesis and possibly also in cell cycle regulation and energy metabolism. The polypeptide is GTPase Era (Clostridium novyi (strain NT)).